The following is a 190-amino-acid chain: Elongation factor P-like protein (190 aa).

It belongs to the elongation factor P family.

In Klebsiella pneumoniae (strain 342), this protein is Elongation factor P-like protein.